The primary structure comprises 115 residues: Large ribosomal subunit protein uL23 (115 aa).

Belongs to the universal ribosomal protein uL23 family. Part of the 50S ribosomal subunit. Contacts protein L29, and trigger factor when it is bound to the ribosome.

Functionally, one of the early assembly proteins it binds 23S rRNA. One of the proteins that surrounds the polypeptide exit tunnel on the outside of the ribosome. Forms the main docking site for trigger factor binding to the ribosome. The chain is Large ribosomal subunit protein uL23 from Granulibacter bethesdensis (strain ATCC BAA-1260 / CGDNIH1).